The following is a 366-amino-acid chain: Alanine racemase (366 aa).

Catalysis depends on lysine 40, which acts as the Proton acceptor; specific for D-alanine. An N6-(pyridoxal phosphate)lysine modification is found at lysine 40. Substrate is bound at residue arginine 136. Tyrosine 263 acts as the Proton acceptor; specific for L-alanine in catalysis. Methionine 310 provides a ligand contact to substrate.

Belongs to the alanine racemase family. It depends on pyridoxal 5'-phosphate as a cofactor.

The catalysed reaction is L-alanine = D-alanine. It functions in the pathway amino-acid biosynthesis; D-alanine biosynthesis; D-alanine from L-alanine: step 1/1. Catalyzes the interconversion of L-alanine and D-alanine. May also act on other amino acids. In Streptococcus pyogenes serotype M28 (strain MGAS6180), this protein is Alanine racemase (alr).